Here is a 292-residue protein sequence, read N- to C-terminus: High-affinity heme uptake system protein IsdE (292 aa).

An N-terminal signal peptide occupies residues 1–19 (MRIIKYLTILVISVVILTS). Cys-20 carries N-palmitoyl cysteine lipidation. Cys-20 carries S-diacylglycerol cysteine lipidation. The Fe/B12 periplasmic-binding domain maps to 35–291 (RIVPTTVALT…QLYDLFYKDK (257 aa)). The heme site is built by Val-41, Ala-42, Ser-60, Tyr-61, Met-78, and His-229.

It belongs to the bacterial solute-binding protein 8 family. Heme b is required as a cofactor.

Its subcellular location is the cell membrane. In terms of biological role, involved in heme (porphyrin) scavenging. Binds Fe(2+) and Fe(3+) heme but the largest fraction is Fe(2+) heme. Functions as a high-affinity heme binding protein and probably has a role in relaying heme-iron from cell wall-anchored isd proteins receptors to the probable permease IsdF. This Staphylococcus aureus (strain bovine RF122 / ET3-1) protein is High-affinity heme uptake system protein IsdE (isdE).